We begin with the raw amino-acid sequence, 215 residues long: Porin MspC (215 aa).

The first 31 residues, 1 to 31 (MKAISRVLIAMISALAAAVAGLFVSAGTSHA), serve as a signal peptide directing secretion.

This sequence belongs to the mycobacterial porin (TC 1.B.24) family. As to quaternary structure, octamers. Probably forms a goblet with the wide end on the exterior of the outer membrane and a central channel. It is not known if mixed oligomers of MspC with other Msp subunits form in vivo.

It is found in the cell outer membrane. It localises to the secreted. The protein localises to the cell wall. Functionally, a constitutively expressed secondary porin, forms a water-filled channel which favors the permeation of cations and less efficiently phosphate. There are about 2400 porins in wild-type, 800 in an mspA deletion and 150 in a double mspA-mspC deletion. The polypeptide is Porin MspC (mspC) (Mycolicibacterium smegmatis (strain ATCC 700084 / mc(2)155) (Mycobacterium smegmatis)).